The sequence spans 1165 residues: DNA-directed RNA polymerase subunit beta (1165 aa).

It belongs to the RNA polymerase beta chain family. The RNAP catalytic core consists of 2 alpha, 1 beta, 1 beta' and 1 omega subunit. When a sigma factor is associated with the core the holoenzyme is formed, which can initiate transcription.

It carries out the reaction RNA(n) + a ribonucleoside 5'-triphosphate = RNA(n+1) + diphosphate. Functionally, DNA-dependent RNA polymerase catalyzes the transcription of DNA into RNA using the four ribonucleoside triphosphates as substrates. This Corynebacterium glutamicum (strain ATCC 13032 / DSM 20300 / JCM 1318 / BCRC 11384 / CCUG 27702 / LMG 3730 / NBRC 12168 / NCIMB 10025 / NRRL B-2784 / 534) protein is DNA-directed RNA polymerase subunit beta.